We begin with the raw amino-acid sequence, 940 residues long: Valine--tRNA ligase (940 aa).

A 'HIGH' region motif is present at residues 47–57; that stretch reads PNVTGVLHMGH. The 'KMSKS' region signature appears at 564-568; sequence KLSKS. An ATP-binding site is contributed by K567. Positions 873-905 form a coiled coil; the sequence is EEHLLKEKGRLEKERVRLERAVENLERLLGDES.

It belongs to the class-I aminoacyl-tRNA synthetase family. ValS type 1 subfamily. Monomer.

The protein localises to the cytoplasm. It catalyses the reaction tRNA(Val) + L-valine + ATP = L-valyl-tRNA(Val) + AMP + diphosphate. Its function is as follows. Catalyzes the attachment of valine to tRNA(Val). As ValRS can inadvertently accommodate and process structurally similar amino acids such as threonine, to avoid such errors, it has a 'posttransfer' editing activity that hydrolyzes mischarged Thr-tRNA(Val) in a tRNA-dependent manner. This is Valine--tRNA ligase from Chlamydia pneumoniae (Chlamydophila pneumoniae).